The sequence spans 59 residues: Small EDRK-rich factor 2 (59 aa).

Composition is skewed to basic and acidic residues over residues 1–30 (MTRGNQRELARQKNMKKQSDSVKGKRRDDG) and 50–59 (KANEKKEEPK). Residues 1-59 (MTRGNQRELARQKNMKKQSDSVKGKRRDDGLSAAARKQRDSEIMQQKQKKANEKKEEPK) are disordered.

This sequence belongs to the SERF family.

In terms of biological role, positive regulator of amyloid protein aggregation and proteotoxicity. Induces conformational changes in amyloid proteins, such as HTT, driving them into compact formations preceding the formation of aggregates. The chain is Small EDRK-rich factor 2 (SERF2) from Plecturocebus moloch (Dusky titi monkey).